Reading from the N-terminus, the 446-residue chain is White-opaque regulator 2 (446 aa).

Positions 1-24 (MTQLPSVSELINRTGSIGSSSNIT) are enriched in polar residues. Residues 1–203 (MTQLPSVSEL…QPNFPYHNNF (203 aa)) are disordered. Low complexity predominate over residues 30–64 (TTTSATNTTTAATATTVTSTTPRSENSYSPNSPYS). Polar residues predominate over residues 67 to 86 (TRPSNTSLTNYSAGSGITVA). Low complexity-rich tracts occupy residues 87–97 (SSSFQFSQPSP) and 104–120 (STSS…QHQS). Polar residues predominate over residues 121–144 (NPSGVSMSSNTSPRTSIVQSMSSV). A compositionally biased stretch (pro residues) spans 166–184 (VQPPPQQQQLQQPPPPPPQ). Positions 185–195 (QQQHIYPQQQP) are enriched in low complexity. The segment at residues 305–332 (CLTCRKRRIKCDERKPTCFNCERSKKSC) is a DNA-binding region (zn(2)-C6 fungal-type). Residues 336–402 (QDLSKLPPRK…SGSSTNSRNL (67 aa)) are disordered. Positions 358 to 369 (NQQQQQQQQNQQ) are enriched in low complexity. The span at 387-401 (HQITSISGSSTNSRN) shows a compositional bias: polar residues.

It is found in the nucleus. Its function is as follows. Transcriptional regulator of the switch between 2 heritable states, the white and opaque states. These 2 cell types differ in many characteristics, including cell structure, mating competence, and virulence. Each state is heritable for many generations, and switching between states occurs stochastically, at low frequency. WOR2 is necessary for the stability of the opaque state phenotypic switching from the white to the opaque phase is a necessary step for mating. Plays a role in cell adhesion and pseudohyphal growth. The polypeptide is White-opaque regulator 2 (WOR2) (Candida albicans (strain SC5314 / ATCC MYA-2876) (Yeast)).